The chain runs to 248 residues: Probable transcriptional regulatory protein RPB_4273 (248 aa).

A disordered region spans residues 1 to 22 (MAGHSQFKNIMHRKGKQDAQRS).

This sequence belongs to the TACO1 family.

It is found in the cytoplasm. The chain is Probable transcriptional regulatory protein RPB_4273 from Rhodopseudomonas palustris (strain HaA2).